Consider the following 358-residue polypeptide: UDP-N-acetylglucosamine--N-acetylmuramyl-(pentapeptide) pyrophosphoryl-undecaprenol N-acetylglucosamine transferase (358 aa).

Residues 13–15 (TGG), Asn125, Arg161, Ser189, Ile244, and Gln288 contribute to the UDP-N-acetyl-alpha-D-glucosamine site.

This sequence belongs to the glycosyltransferase 28 family. MurG subfamily.

It localises to the cell membrane. It catalyses the reaction di-trans,octa-cis-undecaprenyl diphospho-N-acetyl-alpha-D-muramoyl-L-alanyl-D-glutamyl-meso-2,6-diaminopimeloyl-D-alanyl-D-alanine + UDP-N-acetyl-alpha-D-glucosamine = di-trans,octa-cis-undecaprenyl diphospho-[N-acetyl-alpha-D-glucosaminyl-(1-&gt;4)]-N-acetyl-alpha-D-muramoyl-L-alanyl-D-glutamyl-meso-2,6-diaminopimeloyl-D-alanyl-D-alanine + UDP + H(+). The protein operates within cell wall biogenesis; peptidoglycan biosynthesis. Cell wall formation. Catalyzes the transfer of a GlcNAc subunit on undecaprenyl-pyrophosphoryl-MurNAc-pentapeptide (lipid intermediate I) to form undecaprenyl-pyrophosphoryl-MurNAc-(pentapeptide)GlcNAc (lipid intermediate II). The polypeptide is UDP-N-acetylglucosamine--N-acetylmuramyl-(pentapeptide) pyrophosphoryl-undecaprenol N-acetylglucosamine transferase (Baumannia cicadellinicola subsp. Homalodisca coagulata).